The sequence spans 755 residues: E3 ubiquitin-protein ligase TRIM56 (755 aa).

The RING-type zinc finger occupies 21–60 (CKICLEQLRAPKTLPCLHTYCQDCLAQLADGGRVRCPECR). 2 B box-type zinc fingers span residues 98–149 (KPAC…VVDL) and 164–205 (RQAA…CLPL). Positions 169, 172, 192, and 197 each coordinate Zn(2+). Residues 216–314 (LEGLLAGVDN…AAAFARRVLS (99 aa)) are a coiled coil. The interval 371–484 (EEQQPQKDGG…SPALGPNLDG (114 aa)) is disordered. Basic and acidic residues predominate over residues 392–404 (SQSRREDEPKTER). 2 positions are modified to phosphothreonine: Thr418 and Thr442. Residues 419–447 (PKEEKAQTTREEGAQTLEEDRAQTPHEDG) are compositionally biased toward basic and acidic residues. The span at 453-469 (RGGRPNKKKKFKGRLKS) shows a compositional bias: basic residues. Position 475 is a phosphoserine (Ser475).

The protein belongs to the TRIM/RBCC family. Homooligomer. Interacts with STING1. Interacts with TICAM1. Post-translationally, (Microbial infection) Preferentially ubiquitinated with 'Lys-48' and 'Lys-11'-linked ubiquitin chains by Salmonella effector SopA leading to proteasomal targeting and degradation. Autoubiquitinated. In terms of tissue distribution, widely expressed (at protein level).

The protein localises to the cytoplasm. It carries out the reaction S-ubiquitinyl-[E2 ubiquitin-conjugating enzyme]-L-cysteine + [acceptor protein]-L-lysine = [E2 ubiquitin-conjugating enzyme]-L-cysteine + N(6)-ubiquitinyl-[acceptor protein]-L-lysine.. It functions in the pathway protein modification; protein ubiquitination. Functionally, E3 ubiquitin-protein ligase that plays a key role in innate antiviral immunity by mediating ubiquitination of CGAS and STING1. In response to pathogen- and host-derived double-stranded DNA (dsDNA), targets STING1 to 'Lys-63'-linked ubiquitination, thereby promoting its homodimerization, a step required for the production of type I interferon IFN-beta. Also mediate monoubiquitination of CGAS, thereby promoting CGAS oligomerization and subsequent activation. Promotes also TNFalpha-induced NF-kappa-B signaling by mediating 'Lys-63'-linked ubiquitination TAK1, leading to enhanced interaction between TAK1 and CHUK/IKKalpha. Independently of its E3 ubiquitin ligase activity, positive regulator of TLR3 signaling. Potentiates extracellular double stranded RNA (dsRNA)-induced expression of IFNB1 and interferon-stimulated genes ISG15, IFIT1/ISG56, CXCL10, OASL and CCL5/RANTES. Promotes establishment of an antiviral state by TLR3 ligand and TLR3-mediated chemokine induction following infection by hepatitis C virus. Acts as a restriction factor of Zika virus through direct interaction with the viral RNA via its C-terminal region. The protein is E3 ubiquitin-protein ligase TRIM56 of Homo sapiens (Human).